Reading from the N-terminus, the 379-residue chain is Pre-mRNA-processing protein 45 (379 aa).

A compositionally biased stretch (pro residues) spans 1–10 (MFSNRLPPPK). 2 disordered regions span residues 1–22 (MFSN…ALSS) and 353–379 (SEGA…NYGA). The span at 368-379 (AESDDKSDNYGA) shows a compositional bias: basic and acidic residues.

This sequence belongs to the SNW family. As to quaternary structure, belongs to the CWC complex (or CEF1-associated complex), a spliceosome sub-complex reminiscent of a late-stage spliceosome composed of the U2, U5 and U6 snRNAs and at least BUD13, BUD31, BRR2, CDC40, CEF1, CLF1, CUS1, CWC2, CWC15, CWC21, CWC22, CWC23, CWC24, CWC25, CWC27, ECM2, HSH155, IST3, ISY1, LEA1, MSL1, NTC20, PRP8, PRP9, PRP11, PRP19, PRP21, PRP22, PRP45, PRP46, SLU7, SMB1, SMD1, SMD2, SMD3, SMX2, SMX3, SNT309, SNU114, SPP2, SYF1, SYF2, RSE1 and YJU2. Interacts with CLF1, PRP22 and PRP46. Interacts with SPP382.

Its subcellular location is the nucleus. In terms of biological role, involved in pre-mRNA splicing. Associated with the spliceosome throughout the splicing reactions, until after the second catalytic step. The sequence is that of Pre-mRNA-processing protein 45 (PRP45) from Saccharomyces cerevisiae (strain ATCC 204508 / S288c) (Baker's yeast).